Reading from the N-terminus, the 325-residue chain is Diacylglycerol acyltransferase/mycolyltransferase Ag85B (325 aa).

Residues 1 to 40 form the signal peptide; that stretch reads MTDVSRKIRAWGRRLMIGTAAAVVLPGLVGLAGGAATAGA. Residue 82 to 83 coordinates substrate; the sequence is LR. The segment at 98–108 is fibronectin-binding; sequence FEWYYQSGLSI. C127 and C132 are oxidised to a cystine. S166 and D194 together coordinate substrate. S166 acts as the Nucleophile in catalysis. E270 is a catalytic residue. Residues 272–275, K279, and 302–304 contribute to the substrate site; these read FVRS and HSW. Residue H302 is part of the active site.

This sequence belongs to the mycobacterial A85 antigen family.

The protein localises to the secreted. The catalysed reaction is 2 alpha,alpha'-trehalose 6-mycolate = alpha,alpha'-trehalose 6,6'-bismycolate + alpha,alpha-trehalose. It carries out the reaction an acyl-CoA + a 1,2-diacyl-sn-glycerol = a triacyl-sn-glycerol + CoA. Functionally, the antigen 85 proteins (FbpA, FbpB, FbpC) are responsible for the high affinity of mycobacteria for fibronectin, a large adhesive glycoprotein, which facilitates the attachment of Mycobacteria to murine alveolar macrophages (AMs). They also help to maintain the integrity of the cell wall by catalyzing the transfer of mycolic acids to cell wall arabinogalactan and through the synthesis of alpha,alpha-trehalose dimycolate (TDM, cord factor). They catalyze the transfer of a mycoloyl residue from one molecule of alpha,alpha-trehalose monomycolate (TMM) to another TMM, leading to the formation of TDM. The sequence is that of Diacylglycerol acyltransferase/mycolyltransferase Ag85B (fbpB) from Mycobacterium bovis (strain BCG / Pasteur 1173P2).